The following is a 323-amino-acid chain: Viral cathepsin (323 aa).

The first 18 residues, 1-18 (MSKFLLYWFVYGVVCSAA), serve as a signal peptide directing secretion. Residues 19 to 112 (YDILKAPNYF…VVLDRPPGKG (94 aa)) constitute a propeptide, activation peptide. 3 disulfide bridges follow: cysteine 133-cysteine 174, cysteine 167-cysteine 207, and cysteine 262-cysteine 310. Cysteine 136 is a catalytic residue. Asparagine 158 carries N-linked (GlcNAc...) asparagine; by host glycosylation. Catalysis depends on residues histidine 269 and asparagine 289.

It belongs to the peptidase C1 family. Post-translationally, synthesized as an inactive proenzyme and activated by proteolytic removal of the inhibitory propeptide.

It carries out the reaction Endopeptidase of broad specificity, hydrolyzing substrates of both cathepsin L and cathepsin B.. Functionally, cysteine protease that plays an essential role in host liquefaction to facilitate horizontal transmission of the virus. May participate in the degradation of foreign protein expressed by the baculovirus system. This chain is Viral cathepsin (VCATH), found in Lepidoptera (butterflies and moths).